The following is a 402-amino-acid chain: Phosphoglycerate kinase (402 aa).

Substrate contacts are provided by residues 24–26 (DFN), Arg-40, 63–66 (HFGR), Arg-122, and Arg-155. ATP contacts are provided by residues Lys-206, Gly-297, Glu-328, and 357 to 360 (GGDS).

Belongs to the phosphoglycerate kinase family. As to quaternary structure, monomer.

It is found in the cytoplasm. The enzyme catalyses (2R)-3-phosphoglycerate + ATP = (2R)-3-phospho-glyceroyl phosphate + ADP. The protein operates within carbohydrate degradation; glycolysis; pyruvate from D-glyceraldehyde 3-phosphate: step 2/5. This chain is Phosphoglycerate kinase, found in Synechococcus sp. (strain CC9311).